The chain runs to 403 residues: MTESTFSQYPRLVLSKGREKSLLRRHPWVFSGAVSRLEGKANLGETIDIVDHQGKWLARGAWSPASQIRARVWTFDKAESIDIAFFTRRLRQAQQWRDWLAKKDGLDSYRLIAGESDGLPGVTIDRFGHFLVLQLLSAGAEYQRAALISALQTCYPDCAIYDRSDVAVRKKEGMALTQGPVTGELPPALLPIEEHGMKLLVDIQGGHKTGYYLDQRDSRLATRRYVENQRVLNCFSYTGGFAVSALMGGCRQVVSVDTSQDALDIARQNVELNQLDLSKAEFVRDDVFKLLRAYREHGEKFDVIIMDPPKFVENKSQLMGACRGYKDINMLAIQLLNPGGILLTFSCSGLMTSDLFQKIIADAAIDAGRDVQFIEQFRQAADHPVIATYPEGLYLKGFACRVM.

In terms of domain architecture, PUA spans 9-88 (YPRLVLSKGR…ESIDIAFFTR (80 aa)).

The protein belongs to the methyltransferase superfamily. RlmI family.

The protein resides in the cytoplasm. It catalyses the reaction cytidine(1962) in 23S rRNA + S-adenosyl-L-methionine = 5-methylcytidine(1962) in 23S rRNA + S-adenosyl-L-homocysteine + H(+). Functionally, specifically methylates the cytosine at position 1962 (m5C1962) of 23S rRNA. In Salmonella schwarzengrund (strain CVM19633), this protein is Ribosomal RNA large subunit methyltransferase I.